Consider the following 247-residue polypeptide: 2,3-bisphosphoglycerate-dependent phosphoglycerate mutase (247 aa).

Substrate is bound by residues 8–15 (RHGESTWN), 21–22 (TG), R60, 87–90 (ERHY), K98, 114–115 (RR), and 183–184 (GN). Residue H9 is the Tele-phosphohistidine intermediate of the active site. E87 serves as the catalytic Proton donor/acceptor.

This sequence belongs to the phosphoglycerate mutase family. BPG-dependent PGAM subfamily. In terms of assembly, homodimer.

It carries out the reaction (2R)-2-phosphoglycerate = (2R)-3-phosphoglycerate. It functions in the pathway carbohydrate degradation; glycolysis; pyruvate from D-glyceraldehyde 3-phosphate: step 3/5. Its function is as follows. Catalyzes the interconversion of 2-phosphoglycerate and 3-phosphoglycerate. The chain is 2,3-bisphosphoglycerate-dependent phosphoglycerate mutase from Acidovorax sp. (strain JS42).